We begin with the raw amino-acid sequence, 472 residues long: MSVYDAAFLNTELSKPTSIFGLRLWVVIGILLGSLIVIALFLLSLCLTSRRKNRKPRADFASAAIATPPISKEIKEIVPAQNQSVPAEIQVDIGKIEHRVVFSDRVSSGESRGTASASETASYSGSGNCGPEVSHLGWGRWYTLRELEAATNGLCEENVIGEGGYGIVYRGILTDGTKVAVKNLLNNRGQAEKEFKVEVEVIGRVRHKNLVRLLGYCVEGAYRMLVYDFVDNGNLEQWIHGDVGDVSPLTWDIRMNIILGMAKGLAYLHEGLEPKVVHRDIKSSNILLDRQWNAKVSDFGLAKLLGSESSYVTTRVMGTFGYVAPEYACTGMLNEKSDIYSFGILIMEIITGRNPVDYSRPQGETNLVDWLKSMVGNRRSEEVVDPKIPEPPSSKALKRVLLVALRCVDPDANKRPKMGHIIHMLEAEDLLYRDERRTTRDHGSRERQETAVVAAGSESGESGSRHHQQKQR.

The helical transmembrane segment at 24 to 44 threads the bilayer; it reads LWVVIGILLGSLIVIALFLLS. A phosphothreonine mark is found at Thr-67 and Thr-143. The region spanning 154–431 is the Protein kinase domain; the sequence is LCEENVIGEG…IHMLEAEDLL (278 aa). Residues 160 to 168 and Lys-182 contribute to the ATP site; that span reads IGEGGYGIV. At Tyr-227 the chain carries Phosphotyrosine. The active-site Proton acceptor is Asp-280. The residue at position 284 (Ser-284) is a Phosphoserine. Thr-314 and Thr-319 each carry phosphothreonine. Tyr-327 is subject to Phosphotyrosine. Positions 437–449 are enriched in basic and acidic residues; the sequence is RTTRDHGSRERQE. The disordered stretch occupies residues 437 to 472; it reads RTTRDHGSRERQETAVVAAGSESGESGSRHHQQKQR. Over residues 451-462 the composition is skewed to low complexity; the sequence is AVVAAGSESGES.

Belongs to the protein kinase superfamily. Ser/Thr protein kinase family.

The protein resides in the membrane. The catalysed reaction is L-seryl-[protein] + ATP = O-phospho-L-seryl-[protein] + ADP + H(+). The enzyme catalyses L-threonyl-[protein] + ATP = O-phospho-L-threonyl-[protein] + ADP + H(+). The sequence is that of Probable serine/threonine-protein kinase At1g01540 from Arabidopsis thaliana (Mouse-ear cress).